A 1318-amino-acid polypeptide reads, in one-letter code: Putative tetratricopeptide repeat protein 41 (1318 aa).

TPR repeat units lie at residues 399-432 (TQLE…KPCI), 653-684 (WVQE…TPVE), 817-850 (CRLM…LVQS), 858-891 (LKVQ…MLRL), 991-1027 (MEFL…KENA), and 1045-1082 (SDTL…RVIH).

The protein localises to the cytoplasm. This chain is Putative tetratricopeptide repeat protein 41, found in Homo sapiens (Human).